Reading from the N-terminus, the 337-residue chain is tRNA-dihydrouridine synthase B (337 aa).

FMN is bound by residues 19–21 and glutamine 73; that span reads PMA. Cysteine 103 functions as the Proton donor in the catalytic mechanism. FMN-binding positions include lysine 142, 203 to 205, and 227 to 228; these read NGD and GR.

The protein belongs to the Dus family. DusB subfamily. The cofactor is FMN.

The enzyme catalyses a 5,6-dihydrouridine in tRNA + NAD(+) = a uridine in tRNA + NADH + H(+). It catalyses the reaction a 5,6-dihydrouridine in tRNA + NADP(+) = a uridine in tRNA + NADPH + H(+). Its function is as follows. Catalyzes the synthesis of 5,6-dihydrouridine (D), a modified base found in the D-loop of most tRNAs, via the reduction of the C5-C6 double bond in target uridines. The sequence is that of tRNA-dihydrouridine synthase B from Pseudomonas syringae pv. tomato (strain ATCC BAA-871 / DC3000).